Consider the following 437-residue polypeptide: 26S proteasome subunit RPT4 (437 aa).

A disordered region spans residues 1–51 (MSEEQDPLLAGLGETSGDNHTQQSHEQQPEQPQETEEHHEEEPSRVDPEQE). An N-acetylserine modification is found at Ser-2. The span at 20 to 32 (HTQQSHEQQPEQP) shows a compositional bias: low complexity. Residues 35–51 (TEEHHEEEPSRVDPEQE) are compositionally biased toward basic and acidic residues. ATP is bound at residue 222-229 (GPPGTGKT).

This sequence belongs to the AAA ATPase family. Post-translationally, N-acetylated by NAT1.

The 26S proteasome is involved in the ATP-dependent degradation of ubiquitinated proteins. The regulatory (or ATPase) complex confers ATP dependency and substrate specificity to the 26S complex. The chain is 26S proteasome subunit RPT4 (RPT4) from Saccharomyces cerevisiae (strain ATCC 204508 / S288c) (Baker's yeast).